Consider the following 249-residue polypeptide: tRNA pseudouridine synthase A (249 aa).

The active-site Nucleophile is the Asp52. Tyr110 contributes to the substrate binding site.

Belongs to the tRNA pseudouridine synthase TruA family. In terms of assembly, homodimer.

The catalysed reaction is uridine(38/39/40) in tRNA = pseudouridine(38/39/40) in tRNA. Its function is as follows. Formation of pseudouridine at positions 38, 39 and 40 in the anticodon stem and loop of transfer RNAs. The chain is tRNA pseudouridine synthase A from Azobacteroides pseudotrichonymphae genomovar. CFP2.